The sequence spans 317 residues: Ribose-phosphate pyrophosphokinase (317 aa).

ATP-binding positions include 41 to 43 (DME) and 100 to 101 (RQ). Residues His-134 and Asp-174 each contribute to the Mg(2+) site. Residue Lys-197 is part of the active site. D-ribose 5-phosphate contacts are provided by residues Arg-199, Asp-223, and 227 to 231 (DSGGT).

This sequence belongs to the ribose-phosphate pyrophosphokinase family. Class I subfamily. As to quaternary structure, homohexamer. Requires Mg(2+) as cofactor.

It is found in the cytoplasm. The enzyme catalyses D-ribose 5-phosphate + ATP = 5-phospho-alpha-D-ribose 1-diphosphate + AMP + H(+). The protein operates within metabolic intermediate biosynthesis; 5-phospho-alpha-D-ribose 1-diphosphate biosynthesis; 5-phospho-alpha-D-ribose 1-diphosphate from D-ribose 5-phosphate (route I): step 1/1. Involved in the biosynthesis of the central metabolite phospho-alpha-D-ribosyl-1-pyrophosphate (PRPP) via the transfer of pyrophosphoryl group from ATP to 1-hydroxyl of ribose-5-phosphate (Rib-5-P). In Bradyrhizobium diazoefficiens (strain JCM 10833 / BCRC 13528 / IAM 13628 / NBRC 14792 / USDA 110), this protein is Ribose-phosphate pyrophosphokinase.